We begin with the raw amino-acid sequence, 96 residues long: Putative defensin-like protein 236 (96 aa).

The first 23 residues, 1–23 (MKNATSLIIYCFLMFLLMNNVKG), serve as a signal peptide directing secretion. 4 cysteine pairs are disulfide-bonded: Cys31–Cys93, Cys41–Cys70, Cys49–Cys83, and Cys68–Cys85.

The protein belongs to the DEFL family.

The protein resides in the secreted. The protein is Putative defensin-like protein 236 (SCRL20) of Arabidopsis thaliana (Mouse-ear cress).